Here is a 317-residue protein sequence, read N- to C-terminus: Acetyl-coenzyme A carboxylase carboxyl transferase subunit alpha (317 aa).

Residues 43-293 form the CoA carboxyltransferase C-terminal domain; sequence RVRESMADIY…GDVISNALGE (251 aa).

Belongs to the AccA family. As to quaternary structure, acetyl-CoA carboxylase is a heterohexamer composed of biotin carboxyl carrier protein (AccB), biotin carboxylase (AccC) and two subunits each of ACCase subunit alpha (AccA) and ACCase subunit beta (AccD).

It localises to the cytoplasm. It catalyses the reaction N(6)-carboxybiotinyl-L-lysyl-[protein] + acetyl-CoA = N(6)-biotinyl-L-lysyl-[protein] + malonyl-CoA. It functions in the pathway lipid metabolism; malonyl-CoA biosynthesis; malonyl-CoA from acetyl-CoA: step 1/1. Functionally, component of the acetyl coenzyme A carboxylase (ACC) complex. First, biotin carboxylase catalyzes the carboxylation of biotin on its carrier protein (BCCP) and then the CO(2) group is transferred by the carboxyltransferase to acetyl-CoA to form malonyl-CoA. This is Acetyl-coenzyme A carboxylase carboxyl transferase subunit alpha from Rhizobium rhizogenes (strain K84 / ATCC BAA-868) (Agrobacterium radiobacter).